A 146-amino-acid polypeptide reads, in one-letter code: Ferredoxin-thioredoxin reductase catalytic chain, chloroplastic (146 aa).

The transit peptide at 1-26 directs the protein to the chloroplast; it reads MMSMASTTASPFCPSPMPRGRKCTVR. C85 lines the [4Fe-4S] cluster pocket. The active-site Nucleophile is the C87. C87 and C117 are joined by a disulfide. C104, C106, and C115 together coordinate [4Fe-4S] cluster.

It belongs to the ferredoxin thioredoxin reductase beta subunit family. In terms of assembly, heterodimer of subunit A (variable subunit) and subunit B (catalytic subunit). Heterodimeric FTR forms a complex with ferredoxin and thioredoxin. Requires [4Fe-4S] cluster as cofactor.

It is found in the plastid. Its subcellular location is the chloroplast. It catalyses the reaction [thioredoxin]-disulfide + 2 reduced [2Fe-2S]-[ferredoxin] + 2 H(+) = [thioredoxin]-dithiol + 2 oxidized [2Fe-2S]-[ferredoxin]. Its function is as follows. Catalytic subunit of the ferredoxin-thioredoxin reductase (FTR), which catalyzes the two-electron reduction of thioredoxins by the electrons provided by reduced ferredoxin. This is Ferredoxin-thioredoxin reductase catalytic chain, chloroplastic from Oryza sativa subsp. japonica (Rice).